The following is a 322-amino-acid chain: Extracellular metalloprotease AFUA_1G07730 (322 aa).

A signal peptide spans 1–22 (MLPFNSCVYVLLIISLMSNCRA). 2 N-linked (GlcNAc...) asparagine glycosylation sites follow: N123 and N197. H233 lines the Zn(2+) pocket. E234 is an active-site residue. Position 237 (H237) interacts with Zn(2+). Residues C272 and C299 are joined by a disulfide bond.

It belongs to the peptidase M43B family.

It is found in the secreted. Functionally, secreted metalloproteinase that allows assimilation of proteinaceous substrates. Plays a pivotal role as a pathogenicity determinant during infections and contributes to the ability of the pathogen to persist within the mammalian host. The protein is Extracellular metalloprotease AFUA_1G07730 of Aspergillus fumigatus (strain ATCC MYA-4609 / CBS 101355 / FGSC A1100 / Af293) (Neosartorya fumigata).